Reading from the N-terminus, the 481-residue chain is Serralysin B (481 aa).

A propeptide spanning residues 1–15 (MQQNEKASLNTSAAA) is cleaved from the precursor. A Zn(2+)-binding site is contributed by His189. Glu190 is a catalytic residue. Positions 193 and 230 each coordinate Zn(2+). 31 residues coordinate Ca(2+): Arg267, Gly269, Thr271, Asp299, Gly301, Gly302, Asp304, Thr341, Glu343, Gly348, Gly350, Asp352, Asn357, Ala359, Asn361, Gly365, Gly366, Ala367, Gly368, Asp370, Gly374, Gly377, Asp379, Gly383, Gly384, Ala385, Gly386, Asp388, Asp397, Asp404, and Asp414. Hemolysin-type calcium-binding repeat units follow at residues 346-363 (IGGS…DNIL), 364-381 (QGGA…ADTL), and 382-399 (TGGA…QDST).

It belongs to the peptidase M10B family. Ca(2+) serves as cofactor. Requires Zn(2+) as cofactor.

It is found in the secreted. It catalyses the reaction Preferential cleavage of bonds with hydrophobic residues in P1'.. The protein is Serralysin B (prtB) of Dickeya chrysanthemi (Pectobacterium chrysanthemi).